A 102-amino-acid polypeptide reads, in one-letter code: Large ribosomal subunit protein bL21 (102 aa).

The protein belongs to the bacterial ribosomal protein bL21 family. Part of the 50S ribosomal subunit. Contacts protein L20.

Functionally, this protein binds to 23S rRNA in the presence of protein L20. This chain is Large ribosomal subunit protein bL21, found in Cutibacterium acnes (strain DSM 16379 / KPA171202) (Propionibacterium acnes).